We begin with the raw amino-acid sequence, 554 residues long: U4/U6 small nuclear ribonucleoprotein PRP4-like protein (554 aa).

Positions 48–65 (APIPMMPHPPVARPPTFR) are enriched in pro residues. Residues 48–99 (APIPMMPHPPVARPPTFRPPVSQNGGVKTSDSDSESDDEHIEISEESKQVRE) form a disordered region. Residues 88–99 (IEISEESKQVRE) are compositionally biased toward basic and acidic residues. WD repeat units follow at residues 253 to 292 (GDDRPLTGCSFSRDGKILATCSLSGVTKLWEMPQVTNTIA), 296 to 335 (DHKERATDVVFSPVDDCLATASADRTAKLWKTDGTLLQTF), 337 to 376 (GHLDRLARVAFHPSGKYLGTTSYDKTWRLWDINTGAELLL), 379 to 418 (GHSRSVYGIAFQQDGALAASCGLDSLARVWDLRTGRSILV), 421 to 460 (GHIKPVFSVNFSPNGYHLASGGEDNQCRIWDLRMRKSLYI), 463 to 503 (AHAN…LVKS), and 506 to 545 (GHESKVASLDITADSSCIATVSHDRTIKLWTSSGNDDEDE).

It localises to the nucleus speckle. In terms of biological role, participates in pre-mRNA splicing. Part of the U4/U5/U6 tri-snRNP complex, one of the building blocks of the spliceosome. Essential for reproduction. In female gametophyte, is necessary for the egg cell and central cell fate determination and hence reproductive success. Involved in a mechanism that prevents accessory cells from adopting gametic cell fate. Modulates egg cell signaling center that regulates the development of all female gametophytic cells. The polypeptide is U4/U6 small nuclear ribonucleoprotein PRP4-like protein (Arabidopsis thaliana (Mouse-ear cress)).